The chain runs to 226 residues: NifU-like protein 1, chloroplastic (226 aa).

Residues 1–76 (MQTTTVPMAA…PVTAVQLPLT (76 aa)) constitute a chloroplast transit peptide.

It belongs to the NifU family. As to quaternary structure, homodimer; disulfide-linked.

The protein resides in the plastid. The protein localises to the chloroplast stroma. In terms of biological role, molecular scaffold for [Fe-S] cluster assembly of chloroplastic iron-sulfur proteins. This chain is NifU-like protein 1, chloroplastic (NIFU1), found in Oryza sativa subsp. japonica (Rice).